Consider the following 393-residue polypeptide: Messenger RNA-binding inhibitor of apoptosis 1 (393 aa).

Residues E12–K76 form a KH 1-like region. Positions V79–F157 are KH 2-like. The KH 3-like stretch occupies residues E259–N322. The disordered stretch occupies residues M328–D393. Positions S345–T359 are enriched in low complexity.

In terms of assembly, may interact with wago-4. As to expression, expressed throughout the germline and in oocytes (at protein level).

It localises to the cytoplasm. Its subcellular location is the perinuclear region. In terms of biological role, RNA-binding protein which binds to its own mRNA and target mRNAs to negatively regulate gene expression to modulate apoptosis and differentiation in the germline. Negatively regulates the expression of the argonaute protein wago-4, and may thus play a role in RNA-mediated gene silencing (RNAi) in the germline. The sequence is that of Messenger RNA-binding inhibitor of apoptosis 1 from Caenorhabditis elegans.